Here is a 924-residue protein sequence, read N- to C-terminus: Periplasmic nitrate reductase (924 aa).

The segment at residues 1–29 (MNRRDFIKNTAIASACGVAGLSVPSSVLA) is a signal peptide (tat-type signal). In terms of domain architecture, 4Fe-4S Mo/W bis-MGD-type spans 35–91 (WRWDKAVCRFCGTGCGILVARQDGKIVAVKGDPAAPVNRGLNCIKGYFNAKIMYGED). Residues cysteine 42, cysteine 45, cysteine 49, and cysteine 77 each coordinate [4Fe-4S] cluster. Mo-bis(molybdopterin guanine dinucleotide) is bound by residues lysine 79, glutamine 147, asparagine 172, cysteine 176, 209-216 (WGANMAEM), methionine 417, glutamine 421, asparagine 527, 552-553 (SD), lysine 575, aspartate 602, and 814-823 (TGRVLEHWHS). Tryptophan 890 serves as a coordination point for substrate. Residues asparagine 898 and lysine 915 each coordinate Mo-bis(molybdopterin guanine dinucleotide).

It belongs to the prokaryotic molybdopterin-containing oxidoreductase family. NasA/NapA/NarB subfamily. Component of the periplasmic nitrate reductase NapAB complex composed of NapA and NapB. [4Fe-4S] cluster is required as a cofactor. Mo-bis(molybdopterin guanine dinucleotide) serves as cofactor. Predicted to be exported by the Tat system. The position of the signal peptide cleavage has not been experimentally proven.

The protein localises to the periplasm. It catalyses the reaction 2 Fe(II)-[cytochrome] + nitrate + 2 H(+) = 2 Fe(III)-[cytochrome] + nitrite + H2O. Its function is as follows. Catalytic subunit of the periplasmic nitrate reductase complex NapAB. Receives electrons from NapB and catalyzes the reduction of nitrate to nitrite. The sequence is that of Periplasmic nitrate reductase from Campylobacter lari (strain RM2100 / D67 / ATCC BAA-1060).